The sequence spans 90 residues: Probable Fe(2+)-trafficking protein (90 aa).

It belongs to the Fe(2+)-trafficking protein family.

Its function is as follows. Could be a mediator in iron transactions between iron acquisition and iron-requiring processes, such as synthesis and/or repair of Fe-S clusters in biosynthetic enzymes. The protein is Probable Fe(2+)-trafficking protein of Pseudoalteromonas atlantica (strain T6c / ATCC BAA-1087).